Here is a 347-residue protein sequence, read N- to C-terminus: D-alanine--D-alanine ligase (347 aa).

Residues 131–333 enclose the ATP-grasp domain; it reads KRVLESAGIA…YPKLIERLVD (203 aa). Residue 161 to 216 coordinates ATP; that stretch reads EEKLAYPVFTKPSNMGSSVGISKSENQEELRQALKLAFRYDSRVLVEQGVNAREIE. Residues D287, E300, and N302 each contribute to the Mg(2+) site.

Belongs to the D-alanine--D-alanine ligase family. Mg(2+) is required as a cofactor. Mn(2+) serves as cofactor.

It is found in the cytoplasm. The catalysed reaction is 2 D-alanine + ATP = D-alanyl-D-alanine + ADP + phosphate + H(+). Its pathway is cell wall biogenesis; peptidoglycan biosynthesis. Functionally, cell wall formation. The polypeptide is D-alanine--D-alanine ligase (Streptococcus pneumoniae serotype 4 (strain ATCC BAA-334 / TIGR4)).